A 312-amino-acid polypeptide reads, in one-letter code: L-lactate dehydrogenase (312 aa).

The NAD(+) site is built by valine 14, aspartate 35, and tyrosine 66. Residues glutamine 83, arginine 90, and 122–125 (NPVD) each bind substrate. NAD(+) is bound by residues 120-122 (ASN) and serine 145. 150-153 (DSAR) contacts substrate. Histidine 177 serves as the catalytic Proton acceptor. Tyrosine 220 carries the post-translational modification Phosphotyrosine. Threonine 229 is a substrate binding site.

This sequence belongs to the LDH/MDH superfamily. LDH family. As to quaternary structure, homotetramer.

It localises to the cytoplasm. The catalysed reaction is (S)-lactate + NAD(+) = pyruvate + NADH + H(+). Its pathway is fermentation; pyruvate fermentation to lactate; (S)-lactate from pyruvate: step 1/1. In terms of biological role, catalyzes the conversion of lactate to pyruvate. The polypeptide is L-lactate dehydrogenase (Mycoplasma pneumoniae (strain ATCC 29342 / M129 / Subtype 1) (Mycoplasmoides pneumoniae)).